The sequence spans 58 residues: Small ribosomal subunit protein bS21 (58 aa).

A disordered region spans residues 30–58 (SEVRKREHYEKPSVKRKKKSEAARKRKFK). The segment covering 31–42 (EVRKREHYEKPS) has biased composition (basic and acidic residues). The span at 43–58 (VKRKKKSEAARKRKFK) shows a compositional bias: basic residues.

It belongs to the bacterial ribosomal protein bS21 family.

The polypeptide is Small ribosomal subunit protein bS21 (Clostridium perfringens (strain ATCC 13124 / DSM 756 / JCM 1290 / NCIMB 6125 / NCTC 8237 / Type A)).